The sequence spans 237 residues: Cysteine-rich venom protein tigrin (237 aa).

The first 18 residues, 1 to 18, serve as a signal peptide directing secretion; that stretch reads MIVFILLSLAAVLRQSFG. The region spanning 37–165 is the SCP domain; sequence VNIHNSFRRS…LYNYFYVCQY (129 aa). Cystine bridges form between Cys74–Cys152, Cys91–Cys166, Cys147–Cys163, Cys185–Cys192, Cys188–Cys197, Cys201–Cys232, Cys210–Cys226, and Cys217–Cys230. A ShKT domain is found at 201–232; the sequence is CTHKDDYNNCNSLVSDCQSDWDKSHCPATCFC.

It belongs to the CRISP family. Expressed by the venom gland.

It localises to the secreted. This protein does not inhibit smooth muscle contraction elicited by high potassium levels or caffeine. The sequence is that of Cysteine-rich venom protein tigrin from Rhabdophis tigrinus tigrinus (Tiger keelback snake).